Consider the following 237-residue polypeptide: Myelin protein zero-like protein 3 (237 aa).

The first 32 residues, 1–32 (MQLARGTVGGRGCALFPLLSILVVQGARIVLS), serve as a signal peptide directing secretion. The Ig-like V-type domain occupies 33–149 (LEISADAHVR…NIPLTELTVT (117 aa)). Topologically, residues 33–159 (LEISADAHVR…ERGFGTMLSS (127 aa)) are extracellular. A disulfide bond links cysteine 53 and cysteine 129. N-linked (GlcNAc...) asparagine glycosylation occurs at asparagine 124. A helical transmembrane segment spans residues 160-180 (VALLSILVFVPSAVVVILLLV). Over 181-237 (RMGRKATGVQKRSRSGYKKSSIEVSDDTDQEDSNDCMTRLCVRCAECLDSDYEEEAY) the chain is Cytoplasmic.

The protein belongs to the myelin P0 protein family. Present in all tissues tested, including the skin. Present in the keratinocytes and sebocytes in the skin (at protein level).

It is found in the membrane. In terms of biological role, mediates homophilic cell-cell adhesion. The protein is Myelin protein zero-like protein 3 (Mpzl3) of Mus musculus (Mouse).